A 348-amino-acid chain; its full sequence is Phenylalanine--tRNA ligase alpha subunit (348 aa).

Mg(2+) is bound at residue Glu-269.

It belongs to the class-II aminoacyl-tRNA synthetase family. Phe-tRNA synthetase alpha subunit type 1 subfamily. Tetramer of two alpha and two beta subunits. Mg(2+) is required as a cofactor.

The protein resides in the cytoplasm. The catalysed reaction is tRNA(Phe) + L-phenylalanine + ATP = L-phenylalanyl-tRNA(Phe) + AMP + diphosphate + H(+). In Dechloromonas aromatica (strain RCB), this protein is Phenylalanine--tRNA ligase alpha subunit.